We begin with the raw amino-acid sequence, 285 residues long: MEAKVLNGKELSTKIKEELKIEVEDLKKNNINPGLAVIIVGNDPASRVYVNSKKKACAEIGIESFEYALEENTTQEELIELIHKLNKDDKVSGILVQLPLPKHIDEEKVIYAIDPSKDVDAFHPVNVGKLMIGNPDFLPCTPAGVMELIKESGIDITGKECVVVGRSNIVGKPMAMLLLAQNGTVTVCHSRTQNIDEVCKRADILVVAVGKPEFIKGSSIKPGAVVIDVGINRLENKKLVGDVEYESASRVASAITPVPGGVGPMTIAMLMKNTVKAAKLQAKMK.

NADP(+) contacts are provided by residues 165 to 167 (GRS), Ser-190, and Ile-231.

This sequence belongs to the tetrahydrofolate dehydrogenase/cyclohydrolase family. Homodimer.

The enzyme catalyses (6R)-5,10-methylene-5,6,7,8-tetrahydrofolate + NADP(+) = (6R)-5,10-methenyltetrahydrofolate + NADPH. It carries out the reaction (6R)-5,10-methenyltetrahydrofolate + H2O = (6R)-10-formyltetrahydrofolate + H(+). It functions in the pathway one-carbon metabolism; tetrahydrofolate interconversion. In terms of biological role, catalyzes the oxidation of 5,10-methylenetetrahydrofolate to 5,10-methenyltetrahydrofolate and then the hydrolysis of 5,10-methenyltetrahydrofolate to 10-formyltetrahydrofolate. This chain is Bifunctional protein FolD, found in Acetivibrio thermocellus (strain ATCC 27405 / DSM 1237 / JCM 9322 / NBRC 103400 / NCIMB 10682 / NRRL B-4536 / VPI 7372) (Clostridium thermocellum).